Here is a 197-residue protein sequence, read N- to C-terminus: Dephospho-CoA kinase (197 aa).

A DPCK domain is found at 3–197; the sequence is VLGLTGSIGL…IDELRGQRGS (195 aa). ATP is bound at residue 11–16; sequence GLGKST.

It belongs to the CoaE family.

It localises to the cytoplasm. It catalyses the reaction 3'-dephospho-CoA + ATP = ADP + CoA + H(+). The protein operates within cofactor biosynthesis; coenzyme A biosynthesis; CoA from (R)-pantothenate: step 5/5. Its function is as follows. Catalyzes the phosphorylation of the 3'-hydroxyl group of dephosphocoenzyme A to form coenzyme A. The chain is Dephospho-CoA kinase from Mesorhizobium japonicum (strain LMG 29417 / CECT 9101 / MAFF 303099) (Mesorhizobium loti (strain MAFF 303099)).